The chain runs to 81 residues: uncharacterized protein (81 aa).

The next 2 membrane-spanning stretches (helical) occupy residues 1–21 and 27–47; these read MTLFSFFLVILSFYYILFSLL and IFIYIKIIPTVSYFHFNHHFF.

It is found in the membrane. This is an uncharacterized protein from Saccharomyces cerevisiae (strain ATCC 204508 / S288c) (Baker's yeast).